The following is a 372-amino-acid chain: N-methyl-L-tryptophan oxidase (372 aa).

An FAD-binding site is contributed by 4-34 (DLIIIGSGSVGAAAGYYATRAGLNVLMTDAH). Position 308 is an S-8alpha-FAD cysteine (cysteine 308).

It belongs to the MSOX/MTOX family. MTOX subfamily. As to quaternary structure, monomer. The cofactor is FAD.

The catalysed reaction is N(alpha)-methyl-L-tryptophan + O2 + H2O = L-tryptophan + formaldehyde + H2O2. Its function is as follows. Catalyzes the oxidative demethylation of N-methyl-L-tryptophan. This chain is N-methyl-L-tryptophan oxidase, found in Shigella dysenteriae serotype 1 (strain Sd197).